The sequence spans 118 residues: Large ribosomal subunit protein bL19 (118 aa).

This sequence belongs to the bacterial ribosomal protein bL19 family.

Its function is as follows. This protein is located at the 30S-50S ribosomal subunit interface and may play a role in the structure and function of the aminoacyl-tRNA binding site. The protein is Large ribosomal subunit protein bL19 of Geotalea uraniireducens (strain Rf4) (Geobacter uraniireducens).